A 251-amino-acid chain; its full sequence is MVEDSQDTTHFGFQTVAKEQKADMVAQVFHSVAAKYDVMNDLMSFGIHRLWKRFTIDCSGVRRGQKVLDLAGGTGDLTAKFSRLVGESGKVVLADINDSMLKMGREKLRNIGIVGNVEYVQANAEALPFPDNTFDCITISFGLRNVTDKEKALRSMFRVLKPGGRLLVLEFSKPVFEPLNKAYDAYSFHILPRVGELVAKDAGSYRYLAESIRMHPDQETLKAMMNDAGFENVNYYNMTGGIVALHRGYKF.

S-adenosyl-L-methionine-binding positions include Thr74, Asp95, 123–124 (NA), and Ser140.

The protein belongs to the class I-like SAM-binding methyltransferase superfamily. MenG/UbiE family.

The catalysed reaction is a 2-demethylmenaquinol + S-adenosyl-L-methionine = a menaquinol + S-adenosyl-L-homocysteine + H(+). It carries out the reaction a 2-methoxy-6-(all-trans-polyprenyl)benzene-1,4-diol + S-adenosyl-L-methionine = a 5-methoxy-2-methyl-3-(all-trans-polyprenyl)benzene-1,4-diol + S-adenosyl-L-homocysteine + H(+). It participates in quinol/quinone metabolism; menaquinone biosynthesis; menaquinol from 1,4-dihydroxy-2-naphthoate: step 2/2. Its pathway is cofactor biosynthesis; ubiquinone biosynthesis. In terms of biological role, methyltransferase required for the conversion of demethylmenaquinol (DMKH2) to menaquinol (MKH2) and the conversion of 2-polyprenyl-6-methoxy-1,4-benzoquinol (DDMQH2) to 2-polyprenyl-3-methyl-6-methoxy-1,4-benzoquinol (DMQH2). This is Ubiquinone/menaquinone biosynthesis C-methyltransferase UbiE from Cronobacter sakazakii (strain ATCC BAA-894) (Enterobacter sakazakii).